Consider the following 299-residue polypeptide: Delta-9 desaturase-like 3 protein (299 aa).

A run of 2 helical transmembrane segments spans residues 38–57 and 58–76; these read AVGAVHLLCLLAPFNYTWEA and FRFAAMVGISTNLSITFSY. The Histidine box-1 signature appears at 77-82; the sequence is HRNLTH. A Histidine box-2 motif is present at residues 114–118; the sequence is HRFHH. The next 2 membrane-spanning stretches (helical) occupy residues 174 to 194 and 198 to 218; these read IGLHILTFWILVYLWGGLPYL and VGVGGAIGYHATWLINSACHI. The short motif at 246 to 250 is the Histidine box-3 element; sequence HNNHH. Residues 262 to 282 traverse the membrane as a helical segment; that stretch reads WYQVDLTWYLIWFFQVLGLAT.

Belongs to the fatty acid desaturase type 1 family. It depends on Fe cation as a cofactor.

It is found in the endoplasmic reticulum membrane. Its pathway is lipid metabolism; polyunsaturated fatty acid biosynthesis. This chain is Delta-9 desaturase-like 3 protein, found in Arabidopsis thaliana (Mouse-ear cress).